The following is a 318-amino-acid chain: uncharacterized protein (318 aa).

Positions 1-22 (MKASQERSEARRTAHSVKEKKY) are enriched in basic and acidic residues. 2 disordered regions span residues 1–29 (MKAS…ASPR) and 293–318 (DDGD…DDDE).

This is an uncharacterized protein from Ictalurid herpesvirus 1 (strain Auburn) (IcHV-1).